The following is a 492-amino-acid chain: uncharacterized protein (492 aa).

The protein belongs to the FGGY kinase family.

This is an uncharacterized protein from Escherichia coli (strain K12).